The chain runs to 85 residues: Cell division topological specificity factor (85 aa).

This sequence belongs to the MinE family.

Its function is as follows. Prevents the cell division inhibition by proteins MinC and MinD at internal division sites while permitting inhibition at polar sites. This ensures cell division at the proper site by restricting the formation of a division septum at the midpoint of the long axis of the cell. This chain is Cell division topological specificity factor, found in Chromobacterium violaceum (strain ATCC 12472 / DSM 30191 / JCM 1249 / CCUG 213 / NBRC 12614 / NCIMB 9131 / NCTC 9757 / MK).